Reading from the N-terminus, the 87-residue chain is U3-theraphotoxin-Cg1b (87 aa).

The N-terminal stretch at 1–23 (MRTFTLIAILTCAVLVIFHVSAA) is a signal peptide. A propeptide spanning residues 24–48 (EELEAQDVIQPEDIFTGVATLEEDR) is cleaved from the precursor. 3 disulfides stabilise this stretch: C52/C65, C56/C79, and C73/C84.

The protein belongs to the neurotoxin 12 (Hwtx-2) family. 03 (juruin) subfamily. Expressed by the venom gland.

Its subcellular location is the secreted. Functionally, probable ion channel inhibitor. In Chilobrachys guangxiensis (Chinese earth tiger tarantula), this protein is U3-theraphotoxin-Cg1b.